Consider the following 242-residue polypeptide: Biosynthetic peptidoglycan transglycosylase (242 aa).

Residues 12–31 (LLFWLMLASALLVLALRWLP) form a helical membrane-spanning segment.

This sequence belongs to the glycosyltransferase 51 family.

The protein localises to the cell inner membrane. The enzyme catalyses [GlcNAc-(1-&gt;4)-Mur2Ac(oyl-L-Ala-gamma-D-Glu-L-Lys-D-Ala-D-Ala)](n)-di-trans,octa-cis-undecaprenyl diphosphate + beta-D-GlcNAc-(1-&gt;4)-Mur2Ac(oyl-L-Ala-gamma-D-Glu-L-Lys-D-Ala-D-Ala)-di-trans,octa-cis-undecaprenyl diphosphate = [GlcNAc-(1-&gt;4)-Mur2Ac(oyl-L-Ala-gamma-D-Glu-L-Lys-D-Ala-D-Ala)](n+1)-di-trans,octa-cis-undecaprenyl diphosphate + di-trans,octa-cis-undecaprenyl diphosphate + H(+). Its pathway is cell wall biogenesis; peptidoglycan biosynthesis. Peptidoglycan polymerase that catalyzes glycan chain elongation from lipid-linked precursors. In Ectopseudomonas mendocina (strain ymp) (Pseudomonas mendocina), this protein is Biosynthetic peptidoglycan transglycosylase.